A 176-amino-acid chain; its full sequence is Ribosome rescue factor SmrB (176 aa).

The 76-residue stretch at 98 to 173 (LDLHGLTQKQ…GTAALLLLIE (76 aa)) folds into the Smr domain.

Belongs to the SmrB family. Associates with collided ribosomes, but not with correctly translating polysomes.

In terms of biological role, acts as a ribosome collision sensor. Detects stalled/collided disomes (pairs of ribosomes where the leading ribosome is stalled and a second ribosome has collided with it) and endonucleolytically cleaves mRNA at the 5' boundary of the stalled ribosome. Stalled/collided disomes form a new interface (primarily via the 30S subunits) that binds SmrB. Cleaved mRNA becomes available for tmRNA ligation, leading to ribosomal subunit dissociation and rescue of stalled ribosomes. The polypeptide is Ribosome rescue factor SmrB (Yersinia pseudotuberculosis serotype O:1b (strain IP 31758)).